Here is a 214-residue protein sequence, read N- to C-terminus: Pyridoxine/pyridoxamine 5'-phosphate oxidase (214 aa).

Residues 11 to 14 (RREY) and Lys68 contribute to the substrate site. FMN-binding positions include 63–68 (RLVLLK), 78–79 (FT), Arg84, Lys85, and Gln107. Positions 125 and 129 each coordinate substrate. Residues 142 to 143 (QS) and Trp187 each bind FMN. 193 to 195 (RLH) is a binding site for substrate. Arg197 is a binding site for FMN.

Belongs to the pyridoxamine 5'-phosphate oxidase family. Homodimer. FMN serves as cofactor.

It catalyses the reaction pyridoxamine 5'-phosphate + O2 + H2O = pyridoxal 5'-phosphate + H2O2 + NH4(+). The enzyme catalyses pyridoxine 5'-phosphate + O2 = pyridoxal 5'-phosphate + H2O2. Its pathway is cofactor metabolism; pyridoxal 5'-phosphate salvage; pyridoxal 5'-phosphate from pyridoxamine 5'-phosphate: step 1/1. It participates in cofactor metabolism; pyridoxal 5'-phosphate salvage; pyridoxal 5'-phosphate from pyridoxine 5'-phosphate: step 1/1. Its function is as follows. Catalyzes the oxidation of either pyridoxine 5'-phosphate (PNP) or pyridoxamine 5'-phosphate (PMP) into pyridoxal 5'-phosphate (PLP). The chain is Pyridoxine/pyridoxamine 5'-phosphate oxidase from Blochmanniella floridana.